The sequence spans 240 residues: Methylthioribulose-1-phosphate dehydratase (240 aa).

Residue cysteine 99 coordinates substrate. Residues histidine 116 and histidine 118 each coordinate Zn(2+). The Proton donor/acceptor role is filled by glutamate 145. Histidine 201 serves as a coordination point for Zn(2+).

The protein belongs to the aldolase class II family. MtnB subfamily. Zn(2+) serves as cofactor.

It localises to the cytoplasm. It catalyses the reaction 5-(methylsulfanyl)-D-ribulose 1-phosphate = 5-methylsulfanyl-2,3-dioxopentyl phosphate + H2O. The protein operates within amino-acid biosynthesis; L-methionine biosynthesis via salvage pathway; L-methionine from S-methyl-5-thio-alpha-D-ribose 1-phosphate: step 2/6. Functionally, catalyzes the dehydration of methylthioribulose-1-phosphate (MTRu-1-P) into 2,3-diketo-5-methylthiopentyl-1-phosphate (DK-MTP-1-P). The chain is Methylthioribulose-1-phosphate dehydratase from Paracoccidioides brasiliensis (strain Pb03).